Here is a 240-residue protein sequence, read N- to C-terminus: Putative peptidoglycan hydrolase Rv2525c (240 aa).

The tat-type signal signal peptide spans 1 to 33; it reads MSVSRRDVLKFAAATPGVLGLGVVASSLRAAPA.

Post-translationally, predicted to be exported by the Tat system. The position of the signal peptide cleavage has not been experimentally proven.

Its subcellular location is the secreted. The catalysed reaction is Hydrolysis of (1-&gt;4)-beta-linkages between N-acetylmuramic acid and N-acetyl-D-glucosamine residues in a peptidoglycan and between N-acetyl-D-glucosamine residues in chitodextrins.. The protein operates within cell wall degradation; peptidoglycan degradation. In terms of biological role, may function as a peptidoglycan hydrolase with glycosidase activity. In vitro, displays esterase activity toward p-nitrophenyl esters of various acyl chain length (C4 to C16), with a preference for p-nitrophenyl butyrate (C4). This chain is Putative peptidoglycan hydrolase Rv2525c, found in Mycobacterium tuberculosis (strain ATCC 25618 / H37Rv).